The chain runs to 445 residues: Chromosomal replication initiator protein DnaA (445 aa).

The domain I, interacts with DnaA modulators stretch occupies residues 1-71; that stretch reads MEEVWLQAQS…SVQSLTDSQT (71 aa). The tract at residues 71–108 is domain II; that stretch reads TKIELLIAKPKTEKPKQPAASEVTAAEPEACSGPDHST. The interval 83-106 is disordered; sequence EKPKQPAASEVTAAEPEACSGPDH. The segment at 109–325 is domain III, AAA+ region; the sequence is NLNPKYTFDT…GMLIRLGAVS (217 aa). Gly153, Gly155, Lys156, and Thr157 together coordinate ATP. The tract at residues 326–445 is domain IV, binds dsDNA; sequence SLTGKNITLD…VDTLRKGLLS (120 aa).

The protein belongs to the DnaA family. Oligomerizes as a right-handed, spiral filament on DNA at oriC.

The protein resides in the cytoplasm. Functionally, plays an essential role in the initiation and regulation of chromosomal replication. ATP-DnaA binds to the origin of replication (oriC) to initiate formation of the DNA replication initiation complex once per cell cycle. Binds the DnaA box (a 9 base pair repeat at the origin) and separates the double-stranded (ds)DNA. Forms a right-handed helical filament on oriC DNA; dsDNA binds to the exterior of the filament while single-stranded (ss)DNA is stabiized in the filament's interior. The ATP-DnaA-oriC complex binds and stabilizes one strand of the AT-rich DNA unwinding element (DUE), permitting loading of DNA polymerase. After initiation quickly degrades to an ADP-DnaA complex that is not apt for DNA replication. Binds acidic phospholipids. This chain is Chromosomal replication initiator protein DnaA, found in Geobacter sulfurreducens (strain ATCC 51573 / DSM 12127 / PCA).